A 1189-amino-acid chain; its full sequence is Pumilio homolog 1 (1189 aa).

Residue serine 2 is modified to N-acetylserine. Serine 19 is subject to Phosphoserine. Residues leucine 22–glycine 73 are disordered. Positions glutamine 45–alanine 58 are enriched in low complexity. Phosphoserine occurs at positions 75, 98, and 106. Threonine 112 is modified (phosphothreonine). 5 positions are modified to phosphoserine: serine 124, serine 159, serine 197, serine 209, and serine 229. The disordered stretch occupies residues serine 233–glutamate 272. Positions asparagine 250–glutamate 272 are enriched in basic and acidic residues. Serine 305 bears the Phosphoserine mark. The span at glutamine 491–glutamine 503 shows a compositional bias: low complexity. Disordered regions lie at residues glutamine 491–threonine 525 and alanine 614–tyrosine 647. Positions arginine 512 to threonine 525 are enriched in polar residues. Threonine 515 is subject to Phosphothreonine. Over residues glutamine 627–tyrosine 647 the composition is skewed to low complexity. Phosphoserine is present on residues serine 710 and serine 715. The disordered stretch occupies residues glycine 743–leucine 773. The span at leucine 764–leucine 773 shows a compositional bias: low complexity. Omega-N-methylarginine is present on arginine 797. Serine 807 and serine 823 each carry phosphoserine. Residues glycine 829 to tyrosine 1171 enclose the PUM-HD domain. Pumilio repeat units lie at residues glutamate 849 to asparagine 884, glutamate 885 to glutamate 920, arginine 921 to arginine 958, glutamate 959 to aspartate 994, alanine 995 to glutamate 1030, glutamate 1031 to alanine 1066, glutamate 1067 to aspartate 1102, and threonine 1106 to histidine 1145. The adenine-nucleotide binding in RNA target stretch occupies residues serine 864–glutamine 868. A uracil-nucleotide binding in RNA target region spans residues asparagine 900–glutamine 904. Positions cysteine 936–glutamine 940 are adenine-nucleotide binding in RNA target. Residues asparagine 974 to glutamine 978 are non-specific-nucleotide binding in RNA target. Residues cysteine 1010–glutamine 1014 are adenine-nucleotide binding in RNA target. Positions asparagine 1046–glutamine 1050 are uracil-nucleotide binding in RNA target. Guanine-nucleotide binding in RNA target regions lie at residues serine 1082 to glutamate 1086 and asparagine 1083 to glutamate 1086. Positions asparagine 1125–glutamine 1129 are uracil-nucleotide binding in RNA target.

Recruits the CCR4-POP2-NOT deadenylase leading to translational inhibition and mRNA degradation. Interacts with TRIM71 (via NHL repeats) in an RNA-dependent manner. Phosphorylation at Ser-715 promotes RNA-binding activity. Following growth factor stimulation phosphorylated at Ser-715, promoting binding to the 3'-UTR of CDKN1B/p27 mRNA. In terms of tissue distribution, widely expressed. Expressed in brain, heart, kidney, liver, lung, skin, intestine, spleen, testis and thymus. Weakly or not expressed in muscles and stomach. Expressed at various stages of myeloid and lymphoid cell development. Highly expressed in testis. Expressed in all major brain regions (at protein level).

The protein resides in the cytoplasm. It is found in the P-body. Its subcellular location is the cytoplasmic granule. Its function is as follows. Sequence-specific RNA-binding protein that acts as a post-transcriptional repressor by binding the 3'-UTR of mRNA targets. Binds to an RNA consensus sequence, the Pumilio Response Element (PRE), 5'-UGUANAUA-3', that is related to the Nanos Response Element (NRE). Mediates post-transcriptional repression of transcripts via different mechanisms: acts via direct recruitment of the CCR4-POP2-NOT deadenylase leading to translational inhibition and mRNA degradation. Also mediates deadenylation-independent repression by promoting accessibility of miRNAs. Following growth factor stimulation, phosphorylated and binds to the 3'-UTR of CDKN1B/p27 mRNA, inducing a local conformational change that exposes miRNA-binding sites, promoting association of miR-221 and miR-222, efficient suppression of CDKN1B/p27 expression, and rapid entry to the cell cycle. Acts as a post-transcriptional repressor of E2F3 mRNAs by binding to its 3'-UTR and facilitating miRNA regulation. Represses a program of genes necessary to maintain genomic stability such as key mitotic, DNA repair and DNA replication factors. Its ability to repress those target mRNAs is regulated by the lncRNA NORAD (non-coding RNA activated by DNA damage) which, due to its high abundance and multitude of PUMILIO binding sites, is able to sequester a significant fraction of PUM1 and PUM2 in the cytoplasm. Involved in neuronal functions by regulating ATXN1 mRNA levels: acts by binding to the 3'-UTR of ATXN1 transcripts, leading to their down-regulation independently of the miRNA machinery. In testis, acts as a post-transcriptional regulator of spermatogenesis by binding to the 3'-UTR of mRNAs coding for regulators of p53/TP53. Involved in embryonic stem cell renewal by facilitating the exit from the ground state: acts by targeting mRNAs coding for naive pluripotency transcription factors and accelerates their down-regulation at the onset of differentiation. Binds specifically to miRNA MIR199A precursor, with PUM2, regulates miRNA MIR199A expression at a postranscriptional level. The protein is Pumilio homolog 1 of Mus musculus (Mouse).